The sequence spans 92 residues: N(2)-fixation sustaining protein CowN (92 aa).

Belongs to the CowN family.

Is required to sustain N(2)-dependent growth in the presence of low levels of carbon monoxide (CO). Probably acts by protecting the N(2) fixation ability of the nitrogenase complex, which is inactivated in the presence of CO. In Rhodobacter capsulatus (strain ATCC BAA-309 / NBRC 16581 / SB1003), this protein is N(2)-fixation sustaining protein CowN.